The following is a 1173-amino-acid chain: WASH complex subunit 4 (1173 aa).

A2 carries the post-translational modification N-acetylalanine. Phosphoserine is present on S7. Residues 705–1173 (KDLALFFSLN…STVSADPVVK (469 aa)) are sufficient for interaction with WASHC5. The stretch at 1135 to 1161 (RADKTAAEENQEKKEKEEETKTSNGDL) forms a coiled coil. Residues 1142–1155 (EENQEKKEKEEETK) show a composition bias toward basic and acidic residues. The segment at 1142–1173 (EENQEKKEKEEETKTSNGDLSDSTVSADPVVK) is disordered. T1154 carries the post-translational modification Phosphothreonine. A compositionally biased stretch (polar residues) spans 1157 to 1167 (SNGDLSDSTVS).

The protein belongs to the SWIP family. As to quaternary structure, component of the WASH core complex also described as WASH regulatory complex (SHRC) composed of WASH (WASHC1, WASH2P or WASH3P), WASHC2 (WASHC2A or WASHC2C), WASHC3, WASHC4 and WASHC5. The WASH core complex associates via WASHC2 with the F-actin-capping protein dimer (formed by CAPZA1, CAPZA2 or CAPZA3 and CAPZB) in a transient or substoichiometric manner which was initially described as WASH complex.

Its subcellular location is the early endosome. Its function is as follows. Acts as a component of the WASH core complex that functions as a nucleation-promoting factor (NPF) at the surface of endosomes, where it recruits and activates the Arp2/3 complex to induce actin polymerization, playing a key role in the fission of tubules that serve as transport intermediates during endosome sorting. The protein is WASH complex subunit 4 of Homo sapiens (Human).